The primary structure comprises 133 residues: Type VI secretion amidase effector 2 protein (133 aa).

Active-site residues include cysteine 23 and histidine 73.

It belongs to the cell wall amidase Dae2/Tae2-like family.

Its subcellular location is the host periplasm. It localises to the secreted. It functions in the pathway cell wall degradation; peptidoglycan degradation. Its function is as follows. Toxic component of a contact-dependent interbacterial competition system (also called effector-immunity systems). Secreted by the SPI-6 type VI secretion system, probably into the periplasm of bacterial target cells. A cell wall amidase with specificity toward the D-meso-DAP-D-alanine bond (D-meso-diaminopimelic-D-alanine) found in peptidoglycan of Gram-negative bacteria. Toxicity is counteracted by a cognate immunity protein Tai2 (t2585), but not immunity proteins associated with a similar endopeptidase in other bacteria. In vitro degrades peptidoglycans from Gram-negative but not Gram-positive bacteria. The sequence is that of Type VI secretion amidase effector 2 protein from Salmonella typhi.